Consider the following 440-residue polypeptide: Chromosome partition protein MukF (440 aa).

The leucine-zipper stretch occupies residues 208 to 236 (LSETSGTLRELQDTLEAAGDKLQANLLRI).

This sequence belongs to the MukF family. Interacts, and probably forms a ternary complex, with MukE and MukB via its C-terminal region. The complex formation is stimulated by calcium or magnesium. It is required for an interaction between MukE and MukB.

The protein localises to the cytoplasm. The protein resides in the nucleoid. Functionally, involved in chromosome condensation, segregation and cell cycle progression. May participate in facilitating chromosome segregation by condensation DNA from both sides of a centrally located replisome during cell division. Not required for mini-F plasmid partitioning. Probably acts via its interaction with MukB and MukE. Overexpression results in anucleate cells. It has a calcium binding activity. The chain is Chromosome partition protein MukF from Escherichia coli O17:K52:H18 (strain UMN026 / ExPEC).